The following is a 450-amino-acid chain: Probable malate:quinone oxidoreductase (450 aa).

Belongs to the MQO family. Requires FAD as cofactor.

It carries out the reaction (S)-malate + a quinone = a quinol + oxaloacetate. The protein operates within carbohydrate metabolism; tricarboxylic acid cycle; oxaloacetate from (S)-malate (quinone route): step 1/1. This chain is Probable malate:quinone oxidoreductase, found in Helicobacter pylori (strain P12).